A 754-amino-acid chain; its full sequence is Protein tyrosine phosphatase domain-containing protein 1 (754 aa).

In terms of domain architecture, Tyrosine-protein phosphatase spans 82 to 253; the sequence is YSSWVTDNIL…LTPLRNIFSC (172 aa). The active-site Phosphocysteine intermediate is the Cys-190. Phosphoserine is present on residues Ser-392 and Ser-394. Positions 487–498 are enriched in polar residues; sequence SGAFSADVSGSH. Residues 487 to 554 form a disordered region; it reads SGAFSADVSG…PRSPLDCGSS (68 aa). Ser-547 carries the post-translational modification Phosphoserine.

It belongs to the protein-tyrosine phosphatase family. Non-receptor class PTPDC1 subfamily.

Functionally, may play roles in cilia formation and/or maintenance. The chain is Protein tyrosine phosphatase domain-containing protein 1 (PTPDC1) from Homo sapiens (Human).